The sequence spans 503 residues: Probable cytosol aminopeptidase (503 aa).

2 residues coordinate Mn(2+): Lys-270 and Asp-275. Lys-282 is a catalytic residue. Positions 293, 352, and 354 each coordinate Mn(2+). Arg-356 is an active-site residue.

It belongs to the peptidase M17 family. Requires Mn(2+) as cofactor.

The protein resides in the cytoplasm. It carries out the reaction Release of an N-terminal amino acid, Xaa-|-Yaa-, in which Xaa is preferably Leu, but may be other amino acids including Pro although not Arg or Lys, and Yaa may be Pro. Amino acid amides and methyl esters are also readily hydrolyzed, but rates on arylamides are exceedingly low.. The catalysed reaction is Release of an N-terminal amino acid, preferentially leucine, but not glutamic or aspartic acids.. Presumably involved in the processing and regular turnover of intracellular proteins. Catalyzes the removal of unsubstituted N-terminal amino acids from various peptides. The protein is Probable cytosol aminopeptidase of Yersinia pseudotuberculosis serotype O:1b (strain IP 31758).